Consider the following 867-residue polypeptide: Ataxin-7 (867 aa).

Residues 1-15 show a composition bias toward basic and acidic residues; the sequence is MSERAADDVRGEPRR. Positions 1 to 59 are disordered; that stretch reads MSERAADDVRGEPRRAAGGAAAARQQQQQPQPLQPQRQHPPLRRPRAEDGGTGDTTTSA. Positions 16–39 are enriched in low complexity; the sequence is AAGGAAAARQQQQQPQPLQPQRQH. N6-acetyllysine is present on Lys-222. Lys-243 is covalently cross-linked (Glycyl lysine isopeptide (Lys-Gly) (interchain with G-Cter in SUMO); alternate). Lys-243 participates in a covalent cross-link: Glycyl lysine isopeptide (Lys-Gly) (interchain with G-Cter in SUMO2); alternate. The SCA7 domain occupies 320-387; that stretch reads KRLSEREFDP…KAREKELIRH (68 aa). The segment covering 379 to 400 has biased composition (basic and acidic residues); it reads AREKELIRHDSQQVPHPLRDPH. Disordered regions lie at residues 379 to 483, 600 to 711, and 845 to 867; these read AREK…EESV, HGTT…SHSV, and TGNISGAQGLTNNSLLHQPKARP. Pro residues-rich tracts occupy residues 426–437 and 447–462; these read PQTPSLPRPPGC and IDPPPGQESPHPPLPA. The span at 472–481 shows a compositional bias: acidic residues; the sequence is EEGEGDDREE. A compositionally biased stretch (low complexity) spans 619–647; the sequence is SVQSRQVSASSSPPSTPSGLSSVPSSPLS. Residues 649–659 show a composition bias toward basic residues; sequence KPQKWKPSKSI. Residues 665 to 674 show a composition bias toward polar residues; sequence SALSTNCHNA. Low complexity predominate over residues 689–711; the sequence is SSPLLVPSSSSSSSSSSSSSHSV. Residues 846–860 show a composition bias toward polar residues; it reads GNISGAQGLTNNSLL.

This sequence belongs to the ataxin-7 family. As to quaternary structure, component of the SAGA transcription coactivator-HAT complex, at least composed of SUPT3H, GCN5L2, TAF5L, TAF6L, SUPT7L, TADA3L, TAD1L, TAF10, TAF12, TRRAP, TAF9 and ATXN7. The STAGA core complex is associated with a subcomplex required for histone deubiquitination composed of ATXN7L3, ENY2 and USP22. Interacts with SORBS1, PSMC1 and CRX. Interacts with TRRAP, GCN5L2 and TAF10. Interacts with alpha tubulin. In terms of processing, proteolytically cleaved by caspase-7 (CASP7). Post-translationally, sumoylation has no effect on subcellular location or interaction with components of the STAGA complex. Widely expressed in adult tissues, with the highest expression in heart, brain, liver and kidney.

It is found in the nucleus. The protein localises to the nucleolus. The protein resides in the nucleus matrix. Its subcellular location is the cytoplasm. It localises to the cytoskeleton. In terms of biological role, acts as a component of the SAGA (aka STAGA) transcription coactivator-HAT complex. Mediates the interaction of SAGA complex with the CRX and is involved in CRX-dependent gene activation. Probably involved in tethering the deubiquitination module within the SAGA complex. Necessary for microtubule cytoskeleton stabilization. Involved in neurodegeneration. In Mus musculus (Mouse), this protein is Ataxin-7 (Atxn7).